The following is a 507-amino-acid chain: 25-hydroxyvitamin D-1 alpha hydroxylase, mitochondrial (507 aa).

Heme is bound at residue Cys454.

The protein belongs to the cytochrome P450 family. Heme serves as cofactor. Kidney.

Its subcellular location is the mitochondrion membrane. It catalyses the reaction calcidiol + 2 reduced [adrenodoxin] + O2 + 2 H(+) = calcitriol + 2 oxidized [adrenodoxin] + H2O. The catalysed reaction is secalciferol + 2 reduced [adrenodoxin] + O2 + 2 H(+) = calcitetrol + 2 oxidized [adrenodoxin] + H2O. It carries out the reaction 25-hydroxy-24-oxocalciol + 2 reduced [adrenodoxin] + O2 + 2 H(+) = (1S)-1,25-dihydroxy-24-oxocalciol + 2 oxidized [adrenodoxin] + H2O. The enzyme catalyses 25-hydroxyvitamin D2 + 2 reduced [adrenodoxin] + O2 + 2 H(+) = 1alpha,25-dihydroxyvitamin D2 + 2 oxidized [adrenodoxin] + H2O. It functions in the pathway hormone biosynthesis; vitamin D biosynthesis. Its activity is regulated as follows. Activated by cardiolipin and dioleoyl phosphatidylethanolamine (DOPE), phospholipids found in the inner mitochondrial membrane. Inhibited by high substrate concentration. In terms of biological role, a cytochrome P450 monooxygenase involved in vitamin D metabolism and in calcium and phosphorus homeostasis. Catalyzes the rate-limiting step in the activation of vitamin D in the kidney, namely the hydroxylation of 25-hydroxyvitamin D3/calcidiol at the C1-alpha position to form the hormonally active form of vitamin D3, 1alpha,25-dihydroxyvitamin D3/calcitriol that acts via the vitamin D receptor (VDR). Has 1-alpha-hydroxylase activity on vitamin D intermediates of the CYP24A1-mediated inactivation pathway. Converts 24R,25-dihydroxyvitamin D3/secalciferol to 1-alpha,24,25-trihydroxyvitamin D3, an active ligand of VDR. Also active on 25-hydroxyvitamin D2. Mechanistically, uses molecular oxygen inserting one oxygen atom into a substrate, and reducing the second into a water molecule, with two electrons provided by NADPH via FDXR/adrenodoxin reductase and FDX1/adrenodoxin. This Mus musculus (Mouse) protein is 25-hydroxyvitamin D-1 alpha hydroxylase, mitochondrial (Cyp27b1).